Reading from the N-terminus, the 447-residue chain is MEKELKVRTKLLTKEYSLAQTRIDKLKTLFSVFQNKVPTFWALKGVSLDVYSGETIGIIGLNGSGKSTLSNIISGITPQTSGELEINGEVSIISIGAGLNNNLTGRENIRMKCLMLGEKNKEIDAKIDDIIEFSELGVFIDQPVKTYSSGMRAKLGFSIAVHQNPDILVIDEALSVGDQTFYNKGLKKMLAFKEQGKTIFFVSHSIQQVEQICDRVAWMHYGDLRAFGETKHILKEYRAFLHRYNHFTEPQKESYQRDGKAKQRNFSLEQLQETILEKANQQVGSRRTTKEVIKFTTKNKIGDKMTLGTKSLLILLLCMIFYVSLTFVKGISLTTAFIHPAETIQRIFVPEKVAGKDTNAVKTTKTKPASTKESRQQEEVQPSPTNVPENNNSEQAVSTYTVEVGDSVSLIAENHGLTIEQLQTLNPEIIEVPIYPGQVLKLKEVTE.

Positions 24-246 (DKLKTLFSVF…YRAFLHRYNH (223 aa)) constitute an ABC transporter domain. 60–67 (GLNGSGKS) serves as a coordination point for ATP. The segment at 247–447 (FTEPQKESYQ…QVLKLKEVTE (201 aa)) is unknown. Residues 359–393 (NAVKTTKTKPASTKESRQQEEVQPSPTNVPENNNS) form a disordered region. Composition is skewed to polar residues over residues 360–369 (AVKTTKTKPA) and 379–393 (EVQP…NNNS). Residues 398 to 442 (STYTVEVGDSVSLIAENHGLTIEQLQTLNPEIIEVPIYPGQVLKL) form the LysM domain.

The protein belongs to the ABC transporter superfamily. Teichoic acids exporter (TC 3.A.1.104.1) family. As to quaternary structure, the complex is composed of two ATP-binding proteins (TagH) and two transmembrane proteins (TagG).

Its subcellular location is the cell membrane. It catalyses the reaction ATP + H2O + teichoic acidSide 1 = ADP + phosphate + teichoic acidSide 2.. Functionally, part of the ABC transporter complex TagGH involved in teichoic acids export. Responsible for energy coupling to the transport system. This chain is Teichoic acids export ATP-binding protein TagH, found in Enterococcus faecalis (strain ATCC 700802 / V583).